Reading from the N-terminus, the 354-residue chain is Ferrochelatase (354 aa).

H204 and E306 together coordinate Fe cation.

It belongs to the ferrochelatase family.

It is found in the cytoplasm. The catalysed reaction is heme b + 2 H(+) = protoporphyrin IX + Fe(2+). It participates in porphyrin-containing compound metabolism; protoheme biosynthesis; protoheme from protoporphyrin-IX: step 1/1. Functionally, catalyzes the ferrous insertion into protoporphyrin IX. The chain is Ferrochelatase from Coxiella burnetii (strain Dugway 5J108-111).